Here is a 449-residue protein sequence, read N- to C-terminus: KASVGFKAGVKDYRLTYYTPDYETKDTDILAAFRVTPQPGVPAEEAGAAVAAESSTGTWTTVWTDGLTSLDRYKGRCYHIEAVVGEENQYICYVAYPLDLFEEGSVTNMFTSIVGNVFGFKALRALRLEDLRIPPAYSKTFQGPPHGIQVERDKLNKYGRPLLGCTIKPKLGLSAKNYGRAVYECLRGGLDFTKDDENVNSQPFMRWRDRFVFCAEAIYKAQAETGEIKGHYLNATAGTCEEMMKRVTFARELGAPIVMHDYLTGGFTANTTLAHYCRDNGLLLHIHRAMHAVIDRQKNHGMHFRVLAKALRMSGGDHIHAGTVVGKLEGEREMTLGFVDLLRDDFIEKDRRRGIFFTQDWVSMPGVIPVASGGIHVWHMPALTEIFGDDSVLQFGGGTIGHPWGNAPGAVANRVALEACVQARNEGRDLAREGNEIIREAAKWSPELA.

An N6,N6,N6-trimethyllysine modification is found at Lys-7. Asn-116 and Thr-166 together coordinate substrate. Catalysis depends on Lys-168, which acts as the Proton acceptor. Lys-170 is a binding site for substrate. Residues Lys-194, Asp-196, and Glu-197 each contribute to the Mg(2+) site. Residue Lys-194 is modified to N6-carboxylysine. The active-site Proton acceptor is the His-287. Positions 288, 320, and 372 each coordinate substrate.

It belongs to the RuBisCO large chain family. Type I subfamily. Heterohexadecamer of 8 large chains and 8 small chains; disulfide-linked. The disulfide link is formed within the large subunit homodimers. Mg(2+) is required as a cofactor. Post-translationally, the disulfide bond which can form in the large chain dimeric partners within the hexadecamer appears to be associated with oxidative stress and protein turnover.

Its subcellular location is the plastid. It is found in the chloroplast. It catalyses the reaction 2 (2R)-3-phosphoglycerate + 2 H(+) = D-ribulose 1,5-bisphosphate + CO2 + H2O. The enzyme catalyses D-ribulose 1,5-bisphosphate + O2 = 2-phosphoglycolate + (2R)-3-phosphoglycerate + 2 H(+). RuBisCO catalyzes two reactions: the carboxylation of D-ribulose 1,5-bisphosphate, the primary event in carbon dioxide fixation, as well as the oxidative fragmentation of the pentose substrate in the photorespiration process. Both reactions occur simultaneously and in competition at the same active site. This Aspidistra elatior (Cast-iron plant) protein is Ribulose bisphosphate carboxylase large chain.